The chain runs to 790 residues: Endonuclease MutS2 (790 aa).

334–341 (GPNTGGKT) serves as a coordination point for ATP. One can recognise a Smr domain in the interval 715–790 (IDVRGQNLEE…GMGVTIVHLK (76 aa)).

Belongs to the DNA mismatch repair MutS family. MutS2 subfamily. As to quaternary structure, homodimer. Binds to stalled ribosomes, contacting rRNA.

Its function is as follows. Endonuclease that is involved in the suppression of homologous recombination and thus may have a key role in the control of bacterial genetic diversity. Acts as a ribosome collision sensor, splitting the ribosome into its 2 subunits. Detects stalled/collided 70S ribosomes which it binds and splits by an ATP-hydrolysis driven conformational change. Acts upstream of the ribosome quality control system (RQC), a ribosome-associated complex that mediates the extraction of incompletely synthesized nascent chains from stalled ribosomes and their subsequent degradation. Probably generates substrates for RQC. This Alkaliphilus oremlandii (strain OhILAs) (Clostridium oremlandii (strain OhILAs)) protein is Endonuclease MutS2.